We begin with the raw amino-acid sequence, 301 residues long: Acetylglutamate kinase (301 aa).

Substrate contacts are provided by residues 68-69 (GG), Arg-90, and Asn-195.

It belongs to the acetylglutamate kinase family. ArgB subfamily.

It is found in the cytoplasm. The catalysed reaction is N-acetyl-L-glutamate + ATP = N-acetyl-L-glutamyl 5-phosphate + ADP. Its pathway is amino-acid biosynthesis; L-arginine biosynthesis; N(2)-acetyl-L-ornithine from L-glutamate: step 2/4. In terms of biological role, catalyzes the ATP-dependent phosphorylation of N-acetyl-L-glutamate. This is Acetylglutamate kinase from Pseudomonas fluorescens (strain SBW25).